The chain runs to 1152 residues: DNA-directed RNA polymerase subunit beta (1152 aa).

The protein belongs to the RNA polymerase beta chain family. The RNAP catalytic core consists of 2 alpha, 1 beta, 1 beta' and 1 omega subunit. When a sigma factor is associated with the core the holoenzyme is formed, which can initiate transcription.

It catalyses the reaction RNA(n) + a ribonucleoside 5'-triphosphate = RNA(n+1) + diphosphate. DNA-dependent RNA polymerase catalyzes the transcription of DNA into RNA using the four ribonucleoside triphosphates as substrates. The chain is DNA-directed RNA polymerase subunit beta from Deinococcus geothermalis (strain DSM 11300 / CIP 105573 / AG-3a).